The sequence spans 556 residues: Phenylalanine--tRNA ligase beta subunit (556 aa).

The B5 domain occupies 278-353; sequence LTPKEFEVEL…IAYGYNNIEP (76 aa). Asp-331, Asp-337, Glu-340, and Asp-341 together coordinate Mg(2+).

The protein belongs to the phenylalanyl-tRNA synthetase beta subunit family. Type 2 subfamily. As to quaternary structure, tetramer of two alpha and two beta subunits. Requires Mg(2+) as cofactor.

It localises to the cytoplasm. The catalysed reaction is tRNA(Phe) + L-phenylalanine + ATP = L-phenylalanyl-tRNA(Phe) + AMP + diphosphate + H(+). This Pyrococcus horikoshii (strain ATCC 700860 / DSM 12428 / JCM 9974 / NBRC 100139 / OT-3) protein is Phenylalanine--tRNA ligase beta subunit.